A 181-amino-acid chain; its full sequence is ATP-dependent protease subunit HslV (181 aa).

T8 is a catalytic residue. Na(+) contacts are provided by G165, C168, and T171.

This sequence belongs to the peptidase T1B family. HslV subfamily. A double ring-shaped homohexamer of HslV is capped on each side by a ring-shaped HslU homohexamer. The assembly of the HslU/HslV complex is dependent on binding of ATP.

It localises to the cytoplasm. The catalysed reaction is ATP-dependent cleavage of peptide bonds with broad specificity.. Its activity is regulated as follows. Allosterically activated by HslU binding. Its function is as follows. Protease subunit of a proteasome-like degradation complex believed to be a general protein degrading machinery. This Oceanobacillus iheyensis (strain DSM 14371 / CIP 107618 / JCM 11309 / KCTC 3954 / HTE831) protein is ATP-dependent protease subunit HslV.